An 893-amino-acid polypeptide reads, in one-letter code: UPF0182 protein CLI_0022 (893 aa).

7 helical membrane-spanning segments follow: residues isoleucine 9–isoleucine 29, alanine 49–tyrosine 69, leucine 94–tyrosine 114, valine 154–glutamate 174, leucine 202–tryptophan 222, phenylalanine 246–valine 266, and valine 273–leucine 293.

This sequence belongs to the UPF0182 family.

Its subcellular location is the cell membrane. The polypeptide is UPF0182 protein CLI_0022 (Clostridium botulinum (strain Langeland / NCTC 10281 / Type F)).